Reading from the N-terminus, the 185-residue chain is Peptidyl-tRNA hydrolase (185 aa).

Y14 is a tRNA binding site. The active-site Proton acceptor is H19. TRNA is bound by residues Y64, N66, and N112.

This sequence belongs to the PTH family. Monomer.

The protein resides in the cytoplasm. The enzyme catalyses an N-acyl-L-alpha-aminoacyl-tRNA + H2O = an N-acyl-L-amino acid + a tRNA + H(+). In terms of biological role, hydrolyzes ribosome-free peptidyl-tRNAs (with 1 or more amino acids incorporated), which drop off the ribosome during protein synthesis, or as a result of ribosome stalling. Its function is as follows. Catalyzes the release of premature peptidyl moieties from peptidyl-tRNA molecules trapped in stalled 50S ribosomal subunits, and thus maintains levels of free tRNAs and 50S ribosomes. The sequence is that of Peptidyl-tRNA hydrolase from Lactobacillus delbrueckii subsp. bulgaricus (strain ATCC 11842 / DSM 20081 / BCRC 10696 / JCM 1002 / NBRC 13953 / NCIMB 11778 / NCTC 12712 / WDCM 00102 / Lb 14).